Consider the following 239-residue polypeptide: MAVVTLAEMMEAGAHFGHQTRRWNPKMSRYIYCARNGVHIIDLVQTAVCMNNAYKWVRSAARSGKRFLFVGTKKQASEVVAQEALRCGGSYVNQRWLGGMLTNWTTMKARIDRLKDLERMEASGAIAMRPKKEGAVLRRELDRLQKYLGGLKNMRRLPDVVVLVDQRRETNAVLEARKLDIPLVSMLDTNCDPDLCEVPIPCNDDAVRSVQLVLSRLADAINEGRHGSNEQRGGDGSEG.

Belongs to the universal ribosomal protein uS2 family.

The protein is Small ribosomal subunit protein uS2 of Synechococcus sp. (strain WH7803).